We begin with the raw amino-acid sequence, 225 residues long: Ribonuclease 3 (225 aa).

Residues phenylalanine 4–asparagine 133 enclose the RNase III domain. Glutamate 46 is a binding site for Mg(2+). Residue aspartate 50 is part of the active site. Mg(2+) is bound by residues asparagine 119 and glutamate 122. Glutamate 122 is a catalytic residue. The DRBM domain occupies aspartate 158–lysine 225.

The protein belongs to the ribonuclease III family. Homodimer. Mg(2+) serves as cofactor.

Its subcellular location is the cytoplasm. The enzyme catalyses Endonucleolytic cleavage to 5'-phosphomonoester.. Functionally, digests double-stranded RNA. Involved in the processing of primary rRNA transcript to yield the immediate precursors to the large and small rRNAs (23S and 16S). Processes some mRNAs, and tRNAs when they are encoded in the rRNA operon. Processes pre-crRNA and tracrRNA of type II CRISPR loci if present in the organism. The sequence is that of Ribonuclease 3 from Rickettsia felis (strain ATCC VR-1525 / URRWXCal2) (Rickettsia azadi).